The following is a 392-amino-acid chain: Pannexin-3 (392 aa).

The Cytoplasmic segment spans residues Met-1–Lys-39. A helical transmembrane segment spans residues Phe-40–Ser-60. The Extracellular portion of the chain corresponds to Gly-61–Ser-113. Asn-71 carries N-linked (GlcNAc...) asparagine glycosylation. The helical transmembrane segment at Leu-114–Pro-134 threads the bilayer. Residues Ala-135–Leu-215 lie on the Cytoplasmic side of the membrane. Residues Leu-216 to Phe-236 traverse the membrane as a helical segment. At Gln-237–Ser-267 the chain is on the extracellular side. The helical transmembrane segment at Val-268 to Ile-288 threads the bilayer. Residues Tyr-289–Pro-392 lie on the Cytoplasmic side of the membrane.

This sequence belongs to the pannexin family. In terms of assembly, homoheptameric. In terms of tissue distribution, skin.

The protein resides in the cell membrane. Its subcellular location is the cell junction. It is found in the gap junction. It localises to the endoplasmic reticulum membrane. It catalyses the reaction Ca(2+)(in) = Ca(2+)(out). The enzyme catalyses ATP(in) = ATP(out). Functionally, regulator of osteoblast differentiation by functionning as a Ca(2+) channel in the endoplasmic reticulum which regulates calmodulin (CaM) pathways. Allows ATP release into the extracellular space and activation or purinergic receptors. The polypeptide is Pannexin-3 (Panx3) (Rattus norvegicus (Rat)).